The chain runs to 211 residues: ATP-dependent Clp protease proteolytic subunit (211 aa).

S114 serves as the catalytic Nucleophile. H139 is a catalytic residue.

The protein belongs to the peptidase S14 family. As to quaternary structure, fourteen ClpP subunits assemble into 2 heptameric rings which stack back to back to give a disk-like structure with a central cavity, resembling the structure of eukaryotic proteasomes.

Its subcellular location is the cytoplasm. It carries out the reaction Hydrolysis of proteins to small peptides in the presence of ATP and magnesium. alpha-casein is the usual test substrate. In the absence of ATP, only oligopeptides shorter than five residues are hydrolyzed (such as succinyl-Leu-Tyr-|-NHMec, and Leu-Tyr-Leu-|-Tyr-Trp, in which cleavage of the -Tyr-|-Leu- and -Tyr-|-Trp bonds also occurs).. Its function is as follows. Cleaves peptides in various proteins in a process that requires ATP hydrolysis. Has a chymotrypsin-like activity. Plays a major role in the degradation of misfolded proteins. This chain is ATP-dependent Clp protease proteolytic subunit, found in Pseudomonas fluorescens (strain SBW25).